The primary structure comprises 721 residues: Polyribonucleotide nucleotidyltransferase (721 aa).

Mg(2+) is bound by residues D495 and D501. The KH domain occupies 562-621 (PRITTIKIRPERIKDIIGPGGKTIKDITARTGTSINIEDDGSVSIASPNQDKVEEAIKMI). One can recognise an S1 motif domain in the interval 631-699 (GRIYMGTVRK…RSGKIRLSRK (69 aa)). The tract at residues 699-721 (KEALADSAKKSEGTEPPKGEPAK) is disordered.

This sequence belongs to the polyribonucleotide nucleotidyltransferase family. Mg(2+) is required as a cofactor.

The protein resides in the cytoplasm. It catalyses the reaction RNA(n+1) + phosphate = RNA(n) + a ribonucleoside 5'-diphosphate. In terms of biological role, involved in mRNA degradation. Catalyzes the phosphorolysis of single-stranded polyribonucleotides processively in the 3'- to 5'-direction. The sequence is that of Polyribonucleotide nucleotidyltransferase from Anaeromyxobacter dehalogenans (strain 2CP-C).